We begin with the raw amino-acid sequence, 727 residues long: Engulfment and cell motility protein 1 (727 aa).

Tyrosine 18 carries the phosphotyrosine; by HCK modification. N6-acetyllysine occurs at positions 100 and 105. Phosphotyrosine; by HCK is present on tyrosine 216. The ELMO domain occupies 319–492; that stretch reads AQRDIIFELR…VVKEQVMRAL (174 aa). Serine 344 carries the phosphoserine modification. Phosphotyrosine; by HCK is present on residues tyrosine 395 and tyrosine 511. The 122-residue stretch at 555 to 676 folds into the PH domain; the sequence is RLVEGTCFRK…DGLNALLGKD (122 aa). The SH3-binding signature appears at 707–714; that stretch reads PDAPPPIP. At tyrosine 720 the chain carries Phosphotyrosine; by HCK.

Interacts with ADGRB1. Interacts directly with the SH3-domain of DOCK1 via its SH3-binding site. Part of a complex with DOCK1 and RAC1. Part of a complex with DOCK1 and CRK isoform CRK-II. Interacts with PLEKHG6. Interacts with HCK (via SH3 domain). Interacts with ADGRB3. Interacts with DOCK5. In terms of processing, phosphorylated by HCK. As to expression, widely expressed, with a higher expression in the spleen and placenta.

It localises to the cytoplasm. The protein localises to the cell membrane. Involved in cytoskeletal rearrangements required for phagocytosis of apoptotic cells and cell motility. Acts in association with DOCK1 and CRK. Was initially proposed to be required in complex with DOCK1 to activate Rac Rho small GTPases. May enhance the guanine nucleotide exchange factor (GEF) activity of DOCK1. The protein is Engulfment and cell motility protein 1 (ELMO1) of Homo sapiens (Human).